A 335-amino-acid polypeptide reads, in one-letter code: Beta-hexosaminidase (335 aa).

Substrate-binding positions include Asp60, Arg68, Arg133, and 163-164 (KH). The active-site Proton donor/acceptor is the His176. Catalysis depends on Asp247, which acts as the Nucleophile.

It belongs to the glycosyl hydrolase 3 family. NagZ subfamily.

The protein localises to the cytoplasm. The enzyme catalyses Hydrolysis of terminal non-reducing N-acetyl-D-hexosamine residues in N-acetyl-beta-D-hexosaminides.. Its pathway is cell wall biogenesis; peptidoglycan recycling. Plays a role in peptidoglycan recycling by cleaving the terminal beta-1,4-linked N-acetylglucosamine (GlcNAc) from peptide-linked peptidoglycan fragments, giving rise to free GlcNAc, anhydro-N-acetylmuramic acid and anhydro-N-acetylmuramic acid-linked peptides. The chain is Beta-hexosaminidase from Stenotrophomonas maltophilia (strain K279a).